The following is a 574-amino-acid chain: MEVLKKDAALGSPSSVFYFLLLPTLVLWYIYWRLSRAHLYRLAGRLPGPRGLPIVGHLFDVIGPASSVFRTVIRKSAPFEHIAKMWIGPKLVVFIYDPRDVELLLSSHVYIDKASEYKFFKPWLGDGLLISTGQKWRSHRKLIAPTFHLNVLKSFIELFNENSRNVVRKLRAEDGRTFDCHDYMSEATVEILLETAMGVSKKTQDKSGFEYAMAVMRMCDILHARHRSIFLRNEFVFTLTRYYKEQGRLLNIIHGLTTKVIRSKKAAFEQGTRGSLAQCELKAAALEREREQNGGVDQTPSTAGSDEKDREKDKEKASPVAGLSYGQSAGLKDDLDVEDNDIGEKKRLAFLDLMLESAQNGALITDTEIKEQVDTIMFEGHDTTAAGSSFFLSLMGIHQDIQDRVLAELDSIFGDSQRPATFQDTLEMKYLERCLMETLRMYPPVPLIARELQEDLKLNSGNYVIPRGATVTVATVLLHRNPKVYANPNVFDPDNFLPERQANRHYYAFVPFSAGPRSCVGRKYAMLKLKILLSTILRNYRVYSDLTESDFKLQADIILKREEGFRVRLQPRTS.

Positions 288 to 327 (REREQNGGVDQTPSTAGSDEKDREKDKEKASPVAGLSYGQ) are disordered. A compositionally biased stretch (polar residues) spans 295–304 (GVDQTPSTAG). Basic and acidic residues predominate over residues 305–317 (SDEKDREKDKEKA). Heme is bound by residues glutamate 379 and cysteine 519.

This sequence belongs to the cytochrome P450 family. Requires heme as cofactor. In terms of tissue distribution, expressed in larval brain cortex cells and ring glands and weakly in larval digestive system and adult nervous system.

Its subcellular location is the endoplasmic reticulum membrane. The protein resides in the microsome membrane. Probably involved in steroid hormones biosynthesis. The polypeptide is Cytochrome P450 4g15 (Cyp4g15) (Drosophila melanogaster (Fruit fly)).